Here is a 224-residue protein sequence, read N- to C-terminus: Phosphoglycolate phosphatase (224 aa).

The active-site Nucleophile is the D8. Mg(2+) is bound by residues D8, D10, G11, and G43. K151 contacts substrate. Mg(2+) contacts are provided by D174, S175, and D178.

Belongs to the HAD-like hydrolase superfamily. Archaeal SPP-like hydrolase family. As to quaternary structure, homodimer. It depends on Mg(2+) as a cofactor.

The catalysed reaction is 2-phosphoglycolate + H2O = glycolate + phosphate. Its activity is regulated as follows. Inhibited by Ca(2+) ions and by high chloride ion concentration. By contrast, low chloride concentration (up to 50 mM) slightly activate the enzyme. Functionally, catalyzes the dephosphorylation of 2-phosphoglycolate. Also has significant, but less efficient, pyrophosphatase activity, since it is able to catalyze the release of phosphate from inorganic pyrophosphate (PPi). The chain is Phosphoglycolate phosphatase from Thermoplasma acidophilum (strain ATCC 25905 / DSM 1728 / JCM 9062 / NBRC 15155 / AMRC-C165).